A 133-amino-acid chain; its full sequence is UPF0146 protein MTH_1000 (133 aa).

The protein belongs to the UPF0146 family.

In Methanothermobacter thermautotrophicus (strain ATCC 29096 / DSM 1053 / JCM 10044 / NBRC 100330 / Delta H) (Methanobacterium thermoautotrophicum), this protein is UPF0146 protein MTH_1000.